A 95-amino-acid chain; its full sequence is Small ribosomal subunit protein uS17 (95 aa).

Belongs to the universal ribosomal protein uS17 family. Part of the 30S ribosomal subunit.

One of the primary rRNA binding proteins, it binds specifically to the 5'-end of 16S ribosomal RNA. The sequence is that of Small ribosomal subunit protein uS17 from Psychrobacter sp. (strain PRwf-1).